The chain runs to 144 residues: MAGKFSFSNFFGMTEDEDYSTDLQGTKTTDEVSPTSRPDNIISMTAAGNAKMNKIVLCEPRIYSDAKKVGKHLLENKAVIVNFTRIEGAQASRIIDFLTGTVFAINGEIQRVGEQIFLCTPPNYEIDGNLSDIIDQNDFDSEVN.

Residues 21 to 38 (TDLQGTKTTDEVSPTSRP) show a composition bias toward polar residues. Positions 21–40 (TDLQGTKTTDEVSPTSRPDN) are disordered.

Belongs to the SepF family. Homodimer. Interacts with FtsZ.

Its subcellular location is the cytoplasm. Functionally, cell division protein that is part of the divisome complex and is recruited early to the Z-ring. Probably stimulates Z-ring formation, perhaps through the cross-linking of FtsZ protofilaments. Its function overlaps with FtsA. In Latilactobacillus sakei subsp. sakei (strain 23K) (Lactobacillus sakei subsp. sakei), this protein is Cell division protein SepF.